The chain runs to 149 residues: Internal scaffolding protein ORF3 (149 aa).

The protein belongs to the microvidae B protein family.

It localises to the host cytoplasm. Functionally, participates in the assembly of the viral procapsid in the cytoplasm. Released from the procapsid upon genome packaging, possibly through affinity displacement by the protein ORF8, or by proteolysis. The protein is Internal scaffolding protein ORF3 of Spiroplasma virus 4 (SpV4).